Consider the following 153-residue polypeptide: Ribosome maturation factor RimP (153 aa).

Belongs to the RimP family.

It localises to the cytoplasm. Required for maturation of 30S ribosomal subunits. The protein is Ribosome maturation factor RimP of Clostridium botulinum (strain 657 / Type Ba4).